A 249-amino-acid chain; its full sequence is MRGPLCFTLIAIAVTSVVAHTTVYGVWINGVFQGDGRDVYIRSPPNNDPVKDITSSAMACNVNNSPVGTTLSVAGGDRFTFEWYHDNRDDDIIAASHLGPIAVYIAPTTSNGAGTVWTKIFEDVYNGTWATTRLISAHGQHTVVIPEVPAGDYLLRAEIAALHEAYSLYSQVPSKGTQFYISCAQIRVTSESASGSELSANTAFPGTYTDSTPGILWNVYDQDPTEYVAPGPDVWSGAPGGSISQVGSA.

The N-terminal stretch at methionine 1 to alanine 19 is a signal peptide. Histidine 20 and histidine 97 together coordinate Cu(2+). An intrachain disulfide couples cysteine 60 to cysteine 183. Residue histidine 163 participates in O2 binding. Tyrosine 180 is a Cu(2+) binding site.

Belongs to the polysaccharide monooxygenase AA9 family. Cu(2+) is required as a cofactor.

The protein resides in the secreted. The enzyme catalyses [(1-&gt;4)-beta-D-glucosyl]n+m + reduced acceptor + O2 = 4-dehydro-beta-D-glucosyl-[(1-&gt;4)-beta-D-glucosyl]n-1 + [(1-&gt;4)-beta-D-glucosyl]m + acceptor + H2O.. In terms of biological role, lytic polysaccharide monooxygenase (LPMO) that depolymerizes crystalline and amorphous polysaccharides via the oxidation of scissile alpha- or beta-(1-4)-glycosidic bonds, yielding C4 oxidation products. Catalysis by LPMOs requires the reduction of the active-site copper from Cu(II) to Cu(I) by a reducing agent and H(2)O(2) or O(2) as a cosubstrate. Active on cellulose and cello-oligosaccharides, as well as plant cell wall-derived hemicellulosic polysaccharides. Also active on cello-oligosaccharides such as cellohexaose, cellopentaose or cellotetraose. This Armillaria gallica (Bulbous honey fungus) protein is AA9 family lytic polysaccharide monooxygenase A.